A 283-amino-acid chain; its full sequence is Protein MGARP (283 aa).

The disordered stretch occupies residues 1–36 (MYLRRAVSKTLALPRRAPPGPAPLGKDASLRRMSSR). Topologically, residues 1–41 (MYLRRAVSKTLALPRRAPPGPAPLGKDASLRRMSSRKFPGT) are cytoplasmic. The chain crosses the membrane as a helical; Anchor for type IV membrane protein span at residues 42–64 (SGSNMIYYLVVGVTVSAGGYYTY). Residues 65–283 (KALTSKQVRR…VTEETASPQG (219 aa)) are Mitochondrial intermembrane-facing. Disordered regions lie at residues 78 to 101 (VAEP…EHVA) and 118 to 283 (AESV…SPQG). Residues 128–160 (EAAVVLPEESQASAPSEVPAEAAVVEASLSSSE) are compositionally biased toward low complexity. Composition is skewed to polar residues over residues 171 to 184 (VETT…TQEV) and 199 to 220 (ADTS…QEGA). Basic and acidic residues predominate over residues 221–245 (DTTKEEADNSKEAEGTTTEDPRSIS).

As to quaternary structure, interacts with RHOT1/Miro-1, RHOT2/Miro-2, TRAK1/OIP106 and TRAK2/GRIF1. In terms of tissue distribution, expressed in the ovary, testis, brain, adrenal glands and the compartments of the visual nervous system. Expressed in corneal endothelium (CE) (at protein level). Expressed in steroidogenic tissues with the highest level of expression observed in the adrenal gland. Weakly expressed in placenta. Weakly expressed in astrocytes and neurons under normoxia. Strongly expressed in astrocytes and neurons under hypoxia. Expressed in each layer of the retina, with particularly higher staining in the inner segment of the photoreceptor (IS), the outer plexiform layer (OPL) and the ganglion cell layer (GCL).

The protein resides in the mitochondrion. It is found in the mitochondrion outer membrane. Its subcellular location is the mitochondrion inner membrane. Its function is as follows. Plays a role in the trafficking of mitochondria along microtubules. Regulates the kinesin-mediated axonal transport of mitochondria to nerve terminals along microtubules during hypoxia. Participates in the translocation of TRAK2/GRIF1 from the cytoplasm to the mitochondrion. Also plays a role in steroidogenesis through maintenance of mitochondrial abundance and morphology. Plays an inhibitory role during neocortex development by regulating mitochondrial morphology, distribution and motility in neocortical neurons. The sequence is that of Protein MGARP (Mgarp) from Mus musculus (Mouse).